A 360-amino-acid chain; its full sequence is MACKNIRYIVSLLILVSLTFGARIKDIATIEGNRYNYLIGYGLVVGLKGTGDGKATQFTVQSLANMLRRMGIPVDPRRITVKNVAAVMVTAKVPPYAKAGMRFDVEVSSIGDAKSLEGGTLLMTPLRGPDGKVYAIAQGQVIVGGYEARGRGAAQVKNVPTVGRIPNGAILEKDLPFSADFKEVNIYLDEPDFTTAKNVQDVINRAFGKNIAKAVDSATIRVKIPEGYSPVDFLAKVENLEVSTSSVAKVVIDGRSGIVLLGGNVSIEPVAVAVGSLVVEIKERPEVVQPPPLSPGETKVVPRTEVKVKEEKKRLVQIKGTTVSELVDALNSIGATPREIIQVLQAIKSAGALKAKLEVL.

Positions 1 to 22 (MACKNIRYIVSLLILVSLTFGA) are cleaved as a signal peptide.

It belongs to the FlgI family. In terms of assembly, the basal body constitutes a major portion of the flagellar organelle and consists of four rings (L,P,S, and M) mounted on a central rod.

It is found in the periplasm. The protein localises to the bacterial flagellum basal body. Assembles around the rod to form the L-ring and probably protects the motor/basal body from shearing forces during rotation. The chain is Flagellar P-ring protein (flgI) from Aquifex aeolicus (strain VF5).